Here is a 539-residue protein sequence, read N- to C-terminus: Phosphoenolpyruvate carboxykinase (ATP) (539 aa).

Substrate contacts are provided by Arg64, Tyr206, and Lys212. ATP-binding positions include Lys212, His231, and 247–255 (GLSGTGKTT). Positions 212 and 231 each coordinate Mn(2+). Asp268 serves as a coordination point for Mn(2+). Residues Glu296, Arg332, 448–449 (RI), and Thr454 each bind ATP. Arg332 provides a ligand contact to substrate.

The protein belongs to the phosphoenolpyruvate carboxykinase (ATP) family. As to quaternary structure, monomer. Requires Mn(2+) as cofactor.

It is found in the cytoplasm. It catalyses the reaction oxaloacetate + ATP = phosphoenolpyruvate + ADP + CO2. Its pathway is carbohydrate biosynthesis; gluconeogenesis. Its function is as follows. Involved in the gluconeogenesis. Catalyzes the conversion of oxaloacetate (OAA) to phosphoenolpyruvate (PEP) through direct phosphoryl transfer between the nucleoside triphosphate and OAA. This is Phosphoenolpyruvate carboxykinase (ATP) from Sodalis glossinidius (strain morsitans).